Here is a 311-residue protein sequence, read N- to C-terminus: Regulator of rDNA transcription protein 6 (311 aa).

Helical transmembrane passes span 32 to 52 (PHLL…SAEL) and 271 to 291 (YLIV…IIVT).

It is found in the membrane. Functionally, may be involved in the modulation of rDNA transcription. The protein is Regulator of rDNA transcription protein 6 (RRT6) of Saccharomyces cerevisiae (strain ATCC 204508 / S288c) (Baker's yeast).